A 339-amino-acid polypeptide reads, in one-letter code: Histidine protein methyltransferase 1 (339 aa).

Phosphoserine is present on residues Ser-333 and Ser-338.

It belongs to the methyltransferase superfamily. METTL18 family.

The protein resides in the cytoplasm. It is found in the nucleus. The enzyme catalyses L-histidyl-[protein] + S-adenosyl-L-methionine = N(tele)-methyl-L-histidyl-[protein] + S-adenosyl-L-homocysteine + H(+). Its function is as follows. Protein-histidine N-methyltransferase that mediates methylation of target protein on His residues. In Schizosaccharomyces pombe (strain 972 / ATCC 24843) (Fission yeast), this protein is Histidine protein methyltransferase 1.